The following is a 67-amino-acid chain: Large ribosomal subunit protein bL35 (67 aa).

It belongs to the bacterial ribosomal protein bL35 family.

The chain is Large ribosomal subunit protein bL35 from Bartonella quintana (strain Toulouse) (Rochalimaea quintana).